A 93-amino-acid chain; its full sequence is Phosphoribosyl-ATP pyrophosphatase (93 aa).

The protein belongs to the PRA-PH family.

The protein resides in the cytoplasm. The enzyme catalyses 1-(5-phospho-beta-D-ribosyl)-ATP + H2O = 1-(5-phospho-beta-D-ribosyl)-5'-AMP + diphosphate + H(+). Its pathway is amino-acid biosynthesis; L-histidine biosynthesis; L-histidine from 5-phospho-alpha-D-ribose 1-diphosphate: step 2/9. This Metallosphaera sedula (strain ATCC 51363 / DSM 5348 / JCM 9185 / NBRC 15509 / TH2) protein is Phosphoribosyl-ATP pyrophosphatase.